The chain runs to 99 residues: Integration host factor subunit alpha (99 aa).

The interval 49–71 (FGNFDLRDKNQRPGRNPKTGEDI) is disordered.

The protein belongs to the bacterial histone-like protein family. Heterodimer of an alpha and a beta chain.

Its function is as follows. This protein is one of the two subunits of integration host factor, a specific DNA-binding protein that functions in genetic recombination as well as in transcriptional and translational control. The sequence is that of Integration host factor subunit alpha from Shewanella frigidimarina (strain NCIMB 400).